The following is a 376-amino-acid chain: Anhydro-N-acetylmuramic acid kinase (376 aa).

ATP is bound at residue 22-29 (GTSMDGAD).

The protein belongs to the anhydro-N-acetylmuramic acid kinase family.

The enzyme catalyses 1,6-anhydro-N-acetyl-beta-muramate + ATP + H2O = N-acetyl-D-muramate 6-phosphate + ADP + H(+). Its pathway is amino-sugar metabolism; 1,6-anhydro-N-acetylmuramate degradation. It functions in the pathway cell wall biogenesis; peptidoglycan recycling. Its function is as follows. Catalyzes the specific phosphorylation of 1,6-anhydro-N-acetylmuramic acid (anhMurNAc) with the simultaneous cleavage of the 1,6-anhydro ring, generating MurNAc-6-P. Is required for the utilization of anhMurNAc either imported from the medium or derived from its own cell wall murein, and thus plays a role in cell wall recycling. The chain is Anhydro-N-acetylmuramic acid kinase from Neisseria gonorrhoeae (strain NCCP11945).